A 283-amino-acid polypeptide reads, in one-letter code: Putative transposase InsK for insertion sequence element IS150 (283 aa).

One can recognise an Integrase catalytic domain in the interval 117-279 (KATRPNEKWV…TPIEYRNQTY (163 aa)).

This sequence belongs to the transposase IS3/IS150/IS904 family.

In terms of biological role, involved in the transposition of the insertion sequence IS150. This is Putative transposase InsK for insertion sequence element IS150 (insK) from Escherichia coli (strain K12).